The sequence spans 300 residues: Chaperone protein dnaJ 50 (300 aa).

Residues 1–27 form the signal peptide; that stretch reads MAPPVTERWCLALILLFLSLFVQSSTA. Over 28-122 the chain is Lumenal; sequence IYCGAEDCYA…RAKYGHKSDP (95 aa). One can recognise a J domain in the interval 34-98; sequence DCYALLGVAQ…TTRAQYDYAI (65 aa). N-linked (GlcNAc...) asparagine glycans are attached at residues N46 and N88. Residues 123 to 143 form a helical membrane-spanning segment; sequence RAVLVGLLVVLSAFQYLNNVA. Residues 144–206 are Cytoplasmic-facing; sequence RYNEAIATVK…LQIKGAEKPS (63 aa). Residues 207-227 form a helical membrane-spanning segment; that stretch reads VWELLGVRFILLPYTIIKLLV. The Lumenal segment spans residues 228–300; that stretch reads WYSSWVWRYK…EMRKESKRRR (73 aa).

In terms of tissue distribution, expressed in leaves, flower buds and flowers.

It is found in the endoplasmic reticulum membrane. In terms of biological role, may play a role in protein folding in the endoplasmic reticulum. The protein is Chaperone protein dnaJ 50 (C50) of Arabidopsis thaliana (Mouse-ear cress).